A 577-amino-acid chain; its full sequence is Arginine--tRNA ligase (577 aa).

The short motif at 124-132 is the 'HIGH' region element; that stretch reads VAKEMHVGH.

It belongs to the class-I aminoacyl-tRNA synthetase family. As to quaternary structure, monomer.

Its subcellular location is the cytoplasm. The catalysed reaction is tRNA(Arg) + L-arginine + ATP = L-arginyl-tRNA(Arg) + AMP + diphosphate. In Salmonella typhi, this protein is Arginine--tRNA ligase.